Reading from the N-terminus, the 199-residue chain is NAD(P)H dehydrogenase (quinone) (199 aa).

The Flavodoxin-like domain maps to 4–190; it reads VLVLYHSMYG…AIARFQGKHV (187 aa). Residues 10-15 and 79-81 contribute to the FMN site; these read SMYGHI and TRF. Tyr-12 contributes to the NAD(+) binding site. Trp-99 contributes to the substrate binding site. Residue His-134 coordinates FMN.

This sequence belongs to the WrbA family. FMN serves as cofactor.

It carries out the reaction a quinone + NADH + H(+) = a quinol + NAD(+). The catalysed reaction is a quinone + NADPH + H(+) = a quinol + NADP(+). The polypeptide is NAD(P)H dehydrogenase (quinone) (Tolumonas auensis (strain DSM 9187 / NBRC 110442 / TA 4)).